The chain runs to 68 residues: Large ribosomal subunit protein uL29 (68 aa).

The protein belongs to the universal ribosomal protein uL29 family.

This Streptococcus gordonii (strain Challis / ATCC 35105 / BCRC 15272 / CH1 / DL1 / V288) protein is Large ribosomal subunit protein uL29.